A 76-amino-acid polypeptide reads, in one-letter code: MAERPLDVIHRSLDKDVLVLLKRGGEFRGKLIGYDIHLNVVLAGADYIQDGEVVKSYGKIVVRGDNVLAISPVDIE.

In terms of domain architecture, Sm spans 4 to 76; sequence RPLDVIHRSL…VLAISPVDIE (73 aa).

The protein belongs to the snRNP Sm proteins family.

In Thermococcus gammatolerans (strain DSM 15229 / JCM 11827 / EJ3), this protein is Putative snRNP Sm-like protein.